The following is a 592-amino-acid chain: V-type ATP synthase alpha chain (592 aa).

Residue 232-239 coordinates ATP; that stretch reads GPFGSGKT.

Belongs to the ATPase alpha/beta chains family.

The catalysed reaction is ATP + H2O + 4 H(+)(in) = ADP + phosphate + 5 H(+)(out). Functionally, produces ATP from ADP in the presence of a proton gradient across the membrane. The V-type alpha chain is a catalytic subunit. The protein is V-type ATP synthase alpha chain of Clostridioides difficile (strain 630) (Peptoclostridium difficile).